The chain runs to 105 residues: Large ribosomal subunit protein bL34m (105 aa).

A mitochondrion-targeting transit peptide spans 1-16; it reads MPLFARLCQPQSRRMF.

It belongs to the bacterial ribosomal protein bL34 family. As to quaternary structure, component of the mitochondrial large ribosomal subunit (mt-LSU). Mature yeast 74S mitochondrial ribosomes consist of a small (37S) and a large (54S) subunit. The 37S small subunit contains a 15S ribosomal RNA (15S mt-rRNA) and 34 different proteins. The 54S large subunit contains a 21S rRNA (21S mt-rRNA) and 46 different proteins.

The protein localises to the mitochondrion. Component of the mitochondrial ribosome (mitoribosome), a dedicated translation machinery responsible for the synthesis of mitochondrial genome-encoded proteins, including at least some of the essential transmembrane subunits of the mitochondrial respiratory chain. The mitoribosomes are attached to the mitochondrial inner membrane and translation products are cotranslationally integrated into the membrane. The polypeptide is Large ribosomal subunit protein bL34m (Saccharomyces cerevisiae (strain ATCC 204508 / S288c) (Baker's yeast)).